Reading from the N-terminus, the 203-residue chain is Secreted RxLR effector protein RXLR-C28 (203 aa).

The signal sequence occupies residues methionine 1–serine 24. An N-linked (GlcNAc...) asparagine glycan is attached at asparagine 32. Residues arginine 37 to arginine 40 carry the RxLR motif. Asparagine 193 carries N-linked (GlcNAc...) asparagine glycosylation.

It belongs to the RxLR effector family.

It localises to the secreted. Its subcellular location is the host cytoplasm. Its function is as follows. Secreted effector that does not suppress pattern-triggered immunity (PTI) in plant host. In Plasmopara halstedii (Downy mildew of sunflower), this protein is Secreted RxLR effector protein RXLR-C28.